The chain runs to 386 residues: Ribosomal large subunit pseudouridine synthase B (386 aa).

The S4 RNA-binding domain maps to 14-75 (EKLQKVLARL…IRREEAAESV (62 aa)). Aspartate 119 acts as the Nucleophile in catalysis. The interval 260–386 (ALPGMTTKAR…GDGMRPGFRR (127 aa)) is disordered. Composition is skewed to basic and acidic residues over residues 267–276 (KAREKAERQQ) and 284–306 (ARSE…ENAA). Over residues 307–321 (RRAPASRPARGPQPS) the composition is skewed to low complexity. Positions 335–354 (ERPRESNRKPRPSKPRDERP) are enriched in basic and acidic residues.

Belongs to the pseudouridine synthase RsuA family.

The enzyme catalyses uridine(2605) in 23S rRNA = pseudouridine(2605) in 23S rRNA. Functionally, responsible for synthesis of pseudouridine from uracil-2605 in 23S ribosomal RNA. The protein is Ribosomal large subunit pseudouridine synthase B (rluB) of Pseudomonas aeruginosa (strain ATCC 15692 / DSM 22644 / CIP 104116 / JCM 14847 / LMG 12228 / 1C / PRS 101 / PAO1).